We begin with the raw amino-acid sequence, 494 residues long: 3-octaprenyl-4-hydroxybenzoate carboxy-lyase (494 aa).

Residue Asn172 participates in Mn(2+) binding. Residues 175–177 (IYR), 189–191 (RWL), and 194–195 (RG) contribute to the prenylated FMN site. Glu238 provides a ligand contact to Mn(2+). Asp294 acts as the Proton donor in catalysis.

Belongs to the UbiD family. As to quaternary structure, homohexamer. Prenylated FMN serves as cofactor. Mn(2+) is required as a cofactor.

It localises to the cell membrane. It carries out the reaction a 4-hydroxy-3-(all-trans-polyprenyl)benzoate + H(+) = a 2-(all-trans-polyprenyl)phenol + CO2. It participates in cofactor biosynthesis; ubiquinone biosynthesis. In terms of biological role, catalyzes the decarboxylation of 3-octaprenyl-4-hydroxy benzoate to 2-octaprenylphenol, an intermediate step in ubiquinone biosynthesis. This Albidiferax ferrireducens (strain ATCC BAA-621 / DSM 15236 / T118) (Rhodoferax ferrireducens) protein is 3-octaprenyl-4-hydroxybenzoate carboxy-lyase.